The chain runs to 729 residues: Serine/threonine-protein kinase TBK1 (729 aa).

Residues 9–310 (WLLSDILGQG…ETSDILHRMV (302 aa)) enclose the Protein kinase domain. 15–23 (LGQGATANV) is an ATP binding site. Lys30 participates in a covalent cross-link: Glycyl lysine isopeptide (Lys-Gly) (interchain with G-Cter in ubiquitin). Residue Lys38 participates in ATP binding. The active-site Proton acceptor is the Asp135. Ser172 carries the phosphoserine; by autocatalysis and IKKB modification. In terms of domain architecture, Ubiquitin-like spans 309 to 385 (MVIHVFSLQQ…ENPIFVVSRE (77 aa)). Lys401 participates in a covalent cross-link: Glycyl lysine isopeptide (Lys-Gly) (interchain with G-Cter in ubiquitin). Coiled coils occupy residues 407-657 (DLDG…LQET) and 658-713 (LPQK…ILER). The residue at position 607 (Lys607) is an N6-methyllysine; by SETD4. Residues 621 to 729 (RKMLHLRKQL…DGGLRNVDCL (109 aa)) are interaction with AZI2, TANK and TBKBP1. A Glycyl lysine isopeptide (Lys-Gly) (interchain with G-Cter in ubiquitin) cross-link involves residue Lys670. Position 716 is a phosphoserine (Ser716).

The protein belongs to the protein kinase superfamily. Ser/Thr protein kinase family. I-kappa-B kinase subfamily. As to quaternary structure, homodimer. Interacts with DDX3X, TIRAP and TRAF2. Part of a ternary complex consisting of TANK, TRAF2 and TBK1. Interacts with AZI2, TANK and TBKBP1; these interactions are mutually exclusive and mediate TBK1 activation. Interacts with GSK3B; this interaction promotes TBK1 self-association and autophosphorylation. Interacts with SIKE1; SIKE1 is associated with TBK1 under physiological condition and dissociated from TBK1 upon viral infection or TLR3 stimulation. Interacts with IRF3, leading to IRF3 phosphorylation. Interacts with RIGI. Interacts with CYLD. Interacts with OPTN and TRAF3. Interacts with SRC. Interacts with the exocyst complex subunit SEC5/EXOC2; this interaction is sufficient to trigger TBK1 activity. Interacts with STING1, leading to STING1 phosphorylation. Interacts with IFIT3 (via N-terminus). Interacts with MAVS; interaction only takes place in the presence of IFIT3 and leads to MAVS phosphorylation. Interacts (via protein kinase domain) with TTLL12 (via TTL domain); the interaction prevents MAVS binding to TBK1. Interacts with TICAM1; this interaction is enhanced in the presence of WDFY1 and leads to TICAM1 phosphorylation. Interacts with TRIM26. Interacts with TRIM23. Interacts with TTC4 and IKBKE. Interacts with HNRNPA2B1. Interacts with DDX3X. Interacts with TRIM14. Interacts with CEP170; efficient complex formation may be dependent on the presence of CCDC61. Interacts with TRAF3IP3. Interacts with HSP90AA1; the interaction mediates TBK1 association with TOMM70. Interacts with TAX1BP1. Interacts with kinase IKBKB; the complex interacts with STAT1, leading to phosphorylation of STAT1 on 'Thr-749' by IKBKB. Interacts with ICOS; this interaction is critical for the maturation of T follicular regulatory cells. Interacts with RNF144B; this interaction prevents TBK1 phosphorylation and subsequent activation. Interacts with ASB8; this interaction promotes TBK1 proteasomal degradation. Forms a ternary complex with ZNF268 and SETD4; the interaction with SETD4 is ZNF268-dependent and leads to TBK1 monomethylation, which enhances its interaction with IRF3 and MAVS. (Microbial infection) Interacts with Borna disease virus (BDV) P protein leading to its phosphorylation. In terms of assembly, (Microbial infection) Interacts with Ebola virus protein VP35. As to quaternary structure, (Microbial infection) Interacts with HCV NS3; this interaction leads to inhibition of cellular antiviral response by blocking necessary interactions between the TBK1 and its substrates IRF3 and IRF7. (Microbial infection) Interacts with human herpesvirus 1 protein ICP34.5. In terms of assembly, (Microbial infection) Interacts with Zika virus non-structural protein 1/NS1 and non-structural protein 4B/NS4B. As to quaternary structure, (Microbial infection) Interacts with SARS-CoV-2 non-structural protein 6; this interaction decreases IRF3 phosphorylation by 57%, which leads to reduced IFN-beta (IFNB) production. Interacts with SARS-CoV-2 helicase; this interaction inhibits TBK1 phosphorylation and decreases IRF3 phosphorylation by 75%, which leads to reduced IFN-beta production. Interacts with SARS-CoV-2 M protein; the interaction promotes TBK1 degradation via 'Lys-48'-linked ubiquitination. (Microbial infection) Interacts with human cytomegalovirus protein UL35; this interaction inhibits type I interferon production. In terms of assembly, (Microbial infection) Interacts with heartland virus NSs; this interaction antagonizes TBK1 phosphorylation and inhibits TBK1-IRF3 interaction and thus the establishment of an antiviral state. As to quaternary structure, (Microbial infection) Interacts (via N-terminus) with Severe fever with thrombocytopenia virus (SFTSV) NSs; this interaction antagonizes TBK1 phosphorylation and sequesters TBK1 in NSs-induced cytoplasmic inclusion bodies thereby inhibiting the IFN responses. In terms of processing, autophosphorylation at Ser-172 activates the kinase, and is an essential step for virus-triggered signaling. Phosphorylated by IKBKB/IKKB at Ser-172. Phosphorylation requires homodimerization and ubiquitination at Lys-30 and Lys-401. Dephosphorylated at Ser-172 by PPM1B and this negatively regulates its role in mediating antiviral response. Post-translationally, 'Lys-63'-linked polyubiquitination by MIB1 after RNA virus infection, or by NRDP1 after LPS stimulation at Lys-30 and Lys-401, participates in kinase activation. 'Lys-48'-linked polyubiquitination at Lys-670 by DTX4 leads to proteasomal degradation. 'Lys-48'-linked polyubiquitination by TRAIP also leads to proteasomal degradation. 'Lys-48'-linked polyubiquitination by TRAF7; leading to proteasomal degradation. 'Lys-63'-linked polyubiquitination by RNF128 at Lys-30 and Lys-401 leads to the activation of antiviral responses. 'Lys-48'-linked polyubiquitination after 'lys-33'-linked deubiquitination by USP38 promotes TBK1 degradation. (Microbial infection) Interaction with SARS-CoV-2 M protein induces 'Lys-48'-linked ubiquitination which leads to proteasomal degradation. In terms of processing, (Microbial infection) Deubiquitinated by Epstein-Barr virus BPLF1 on both 'Lys-48' and 'Lys-63'-linked ubiquitin chains; leading to inhibition of type I interfewron production. Post-translationally, monomethylation at Lys-607 by SETD4 maximizes TBK1 activation and promotes efficient interferon signaling. In terms of tissue distribution, ubiquitous with higher expression in testis. Expressed in the ganglion cells, nerve fiber layer and microvasculature of the retina.

The protein localises to the cytoplasm. The enzyme catalyses L-seryl-[protein] + ATP = O-phospho-L-seryl-[protein] + ADP + H(+). It catalyses the reaction L-threonyl-[protein] + ATP = O-phospho-L-threonyl-[protein] + ADP + H(+). Serine/threonine kinase that plays an essential role in regulating inflammatory responses to foreign agents. Following activation of toll-like receptors by viral or bacterial components, associates with TRAF3 and TANK and phosphorylates interferon regulatory factors (IRFs) IRF3 and IRF7 as well as DDX3X. This activity allows subsequent homodimerization and nuclear translocation of the IRFs leading to transcriptional activation of pro-inflammatory and antiviral genes including IFNA and IFNB. In order to establish such an antiviral state, TBK1 form several different complexes whose composition depends on the type of cell and cellular stimuli. Plays a key role in IRF3 activation: acts by first phosphorylating innate adapter proteins MAVS, STING1 and TICAM1 on their pLxIS motif, leading to recruitment of IRF3, thereby licensing IRF3 for phosphorylation by TBK1. Phosphorylated IRF3 dissociates from the adapter proteins, dimerizes, and then enters the nucleus to induce expression of interferons. Thus, several scaffolding molecules including FADD, TRADD, MAVS, AZI2, TANK or TBKBP1/SINTBAD can be recruited to the TBK1-containing-complexes. Under particular conditions, functions as a NF-kappa-B effector by phosphorylating NF-kappa-B inhibitor alpha/NFKBIA, IKBKB or RELA to translocate NF-Kappa-B to the nucleus. Restricts bacterial proliferation by phosphorylating the autophagy receptor OPTN/Optineurin on 'Ser-177', thus enhancing LC3 binding affinity and antibacterial autophagy. Phosphorylates SMCR8 component of the C9orf72-SMCR8 complex, promoting autophagosome maturation. Phosphorylates ATG8 proteins MAP1LC3C and GABARAPL2, thereby preventing their delipidation and premature removal from nascent autophagosomes. Seems to play a role in energy balance regulation by sustaining a state of chronic, low-grade inflammation in obesity, which leads to a negative impact on insulin sensitivity. Attenuates retroviral budding by phosphorylating the endosomal sorting complex required for transport-I (ESCRT-I) subunit VPS37C. Phosphorylates Borna disease virus (BDV) P protein. Plays an essential role in the TLR3- and IFN-dependent control of herpes virus HSV-1 and HSV-2 infections in the central nervous system. Acts both as a positive and negative regulator of the mTORC1 complex, depending on the context: activates mTORC1 in response to growth factors by catalyzing phosphorylation of MTOR, while it limits the mTORC1 complex by promoting phosphorylation of RPTOR. Acts as a positive regulator of the mTORC2 complex by mediating phosphorylation of MTOR, leading to increased phosphorylation and activation of AKT1. Phosphorylates and activates AKT1. Involved in the regulation of TNF-induced RIPK1-mediated cell death, probably acting via CYLD phosphorylation that in turn controls RIPK1 ubiquitination status. Also participates in the differentiation of T follicular regulatory cells together with the receptor ICOS. This chain is Serine/threonine-protein kinase TBK1, found in Homo sapiens (Human).